Here is an 828-residue protein sequence, read N- to C-terminus: G-type lectin S-receptor-like serine/threonine-protein kinase At2g19130 (828 aa).

The N-terminal stretch at 1 to 22 is a signal peptide; sequence MVSFLTLTSFFFICFFIHGSSA. The Bulb-type lectin domain occupies 23-146; it reads VDTISGDFTL…GSSLSANVLW (124 aa). Over 23–439 the chain is Extracellular; sequence VDTISGDFTL…GASGKSNNKG (417 aa). Asn85, Asn113, Asn203, Asn234, Asn240, and Asn255 each carry an N-linked (GlcNAc...) asparagine glycan. Positions 286–322 constitute an EGF-like domain; the sequence is PRQQCQVYRYCGSFGICSDKSEPFCRCPQGFRPMSQK. Cystine bridges form between Cys290–Cys302, Cys296–Cys310, Cys372–Cys394, and Cys376–Cys382. The PAN domain occupies 341 to 422; that stretch reads CSRGDINQFF…EGNIFYLRLA (82 aa). The helical transmembrane segment at 440–460 threads the bilayer; it reads LIFGAVLGSLGVIVLVLLVVI. Residues 461-828 are Cytoplasmic-facing; sequence LILRYRRRKR…KKMTNDNSSA (368 aa). One can recognise a Protein kinase domain in the interval 493-770; that stretch reads KNFSDKLGGG…QVVQILEGVL (278 aa). ATP contacts are provided by residues 499 to 507 and Lys521; that span reads LGGGGFGSV. A Phosphoserine modification is found at Ser527. Positions 582–600 are caM-binding; the sequence is VEEKIVLGWKLRFQIALGT. The active-site Proton acceptor is the Asp619. Thr653 is modified (phosphothreonine). The disordered stretch occupies residues 796 to 828; it reads ESSSSSSHNSSQNHKHSSSSSSSKKMTNDNSSA. Residues 797 to 828 show a composition bias toward low complexity; it reads SSSSSSHNSSQNHKHSSSSSSSKKMTNDNSSA. The residue at position 815 (Ser815) is a Phosphoserine.

It belongs to the protein kinase superfamily. Ser/Thr protein kinase family.

The protein localises to the cell membrane. It carries out the reaction L-seryl-[protein] + ATP = O-phospho-L-seryl-[protein] + ADP + H(+). It catalyses the reaction L-threonyl-[protein] + ATP = O-phospho-L-threonyl-[protein] + ADP + H(+). The protein is G-type lectin S-receptor-like serine/threonine-protein kinase At2g19130 of Arabidopsis thaliana (Mouse-ear cress).